A 179-amino-acid chain; its full sequence is Large ribosomal subunit protein uL6 (179 aa).

This sequence belongs to the universal ribosomal protein uL6 family. In terms of assembly, part of the 50S ribosomal subunit.

In terms of biological role, this protein binds to the 23S rRNA, and is important in its secondary structure. It is located near the subunit interface in the base of the L7/L12 stalk, and near the tRNA binding site of the peptidyltransferase center. The protein is Large ribosomal subunit protein uL6 of Parasynechococcus marenigrum (strain WH8102).